A 225-amino-acid chain; its full sequence is MQKKAVILYSGGLDSTTCLAIAKKQGFAPYALSFSYGQRHQQELEVAKLNARPMGAVDHLLVEFDLRKMGGSALTSDIEVPKEGVGEEIPVTYVPARNTIFLSFALGWAETLDCFDIFIGVNALDYSGYPDCRPEFISAYETMANLATKAGVEGKRLQIHTPLISLTKAEIIQKGISLGVDYSKTHSCYDPAEDGAACGRCDSCRLRLKGFAEAGVTDPVRYQKL.

Residue 9-19 (YSGGLDSTTCL) participates in ATP binding. Zn(2+)-binding residues include Cys188, Cys198, Cys201, and Cys204.

This sequence belongs to the QueC family. Requires Zn(2+) as cofactor.

The catalysed reaction is 7-carboxy-7-deazaguanine + NH4(+) + ATP = 7-cyano-7-deazaguanine + ADP + phosphate + H2O + H(+). It participates in purine metabolism; 7-cyano-7-deazaguanine biosynthesis. Catalyzes the ATP-dependent conversion of 7-carboxy-7-deazaguanine (CDG) to 7-cyano-7-deazaguanine (preQ(0)). This chain is 7-cyano-7-deazaguanine synthase, found in Geobacter sp. (strain M21).